We begin with the raw amino-acid sequence, 628 residues long: Kelch-like protein 14 (628 aa).

Residues 33–151 form the BTB domain; that stretch reads CDVTLTAQGQ…LYTANVTLSL (119 aa). The tract at residues 69–115 is disordered; that stretch reads GGGVGGQDGLGAPKDQQQPPQQQPSQQQQPPPQEEPGTPSSSPDDKL. Over residues 84-96 the composition is skewed to low complexity; the sequence is QQQPPQQQPSQQQ. The region spanning 210 to 279 is the BACK domain; that stretch reads VEDVLLLNFE…PAPELVERVQ (70 aa). 6 Kelch repeats span residues 323-372, 373-424, 425-471, 473-518, 520-570, and 572-620; these read MLLL…EVEN, FLFV…RLDK, HLYV…VHNG, IYIS…VMND, LYAI…VLDD, and IYLV…TVIL.

As to quaternary structure, interacts with TOR1A, preferentially with the ATP-free form.

The protein resides in the cytoplasm. The protein localises to the cytosol. It is found in the endoplasmic reticulum membrane. The chain is Kelch-like protein 14 (KLHL14) from Homo sapiens (Human).